The following is a 327-amino-acid chain: RNA ligase 1 (327 aa).

It depends on Mg(2+) as a cofactor. The cofactor is Mn(2+). Post-translationally, AMPylates itself (auto-AMPylation).

The catalysed reaction is ATP + (ribonucleotide)n-3'-hydroxyl + 5'-phospho-(ribonucleotide)m = (ribonucleotide)n+m + AMP + diphosphate.. Its function is as follows. Functions as an RNA ligase, in vitro. The ligation reaction entails three nucleotidyl transfer steps. In the first step, the RNA ligase reacts with ATP in the absence of nucleic acid to form a covalent ligase-AMP intermediate and release pyrophosphate. In step 2, the ligase-AMP binds to the nucleic acid and transfers the adenylate to the 5'-PO4 terminus to form an adenylylated intermediate. In step 3, the RNA ligase directs the attack of the 3'-OH on the 5'-phosphoanhydride linkage, resulting in a repaired 3'-5' phosphodiester and release of AMP. Exhibits selectivity for single-stranded RNA substrates and may not have nick-sealing activity on double-stranded DNA-RNA hybrids. May play a role in maintaining RNA integrity under stress conditions, for example in response to reactive oxygen species (ROS). The sequence is that of RNA ligase 1 from Mus musculus (Mouse).